The primary structure comprises 3412 residues: Genome polyprotein (3412 aa).

At 1-104 (MSGRKAQGKT…LSSRKRRSNE (104 aa)) the chain is on the cytoplasmic side. The segment at 38–72 (PGPSRGVQGFIFFFLFNILTGKKLTTHLKRLWRML) is hydrophobic; homodimerization of capsid protein C. Residues 102-121 (SNEMAMMPLLILSMVILAGG) constitute a propeptide, ER anchor for the capsid protein C, removed in mature form by serine protease NS3. A helical membrane pass occupies residues 105 to 125 (MAMMPLLILSMVILAGGVTLV). At 126–244 (RKNRWLLLNV…GERQLQKIER (119 aa)) the chain is on the extracellular side. N134 and N150 each carry an N-linked (GlcNAc...) asparagine; by host glycan. Residues 245 to 265 (WLVRNPFFAITALAIAYLVGN) form a helical membrane-spanning segment. The Cytoplasmic segment spans residues 266 to 270 (NMTQR). A helical transmembrane segment spans residues 271 to 285 (VVIALLVLAVGPAYS). Residues 286–730 (AHCIGITDRD…TVFGSAFQGL (445 aa)) are Extracellular-facing. 8 disulfides stabilise this stretch: C288–C315, C345–C401, C345–C406, C359–C390, C377–C401, C377–C406, C467–C568, and C585–C615. The fusion peptide stretch occupies residues 383–396 (DRGWGNGCGLFGKG). Residues 731–751 (FGGLSWITKVIMGAVLIWVGI) form a helical membrane-spanning segment. At 752 to 757 (NTRNMT) the chain is on the extracellular side. Residues 758 to 778 (MSMSMILVGVIMMFLSLGVGA) form a helical membrane-spanning segment. At 779-1132 (DQGCAVNFGK…LVRSWVTAGE (354 aa)) the chain is on the extracellular side. Cystine bridges form between C782–C793, C833–C921, C957–C1002, C1058–C1107, C1069–C1091, and C1090–C1094. Residues N908 and N986 are each glycosylated (N-linked (GlcNAc...) asparagine; by host). Residues 1133–1153 (VHAVPFGLVSMMIAMEVVLRK) traverse the membrane as a helical segment. Topologically, residues 1154-1201 (RQGPKQMLVGGIILLGAMLVGQVTVLDLVKLIVAVGLHFHEINNGGDA) are cytoplasmic. A helical membrane pass occupies residues 1202 to 1222 (MYMALIASFSIRPGLLVGFGL). Topologically, residues 1223–1287 (RTLWSPRERL…VLPLMALLTP (65 aa)) are lumenal. A helical transmembrane segment spans residues 1288–1308 (VTMHEVRMATMLFCTVVIVGV). The Cytoplasmic portion of the chain corresponds to 1309-1355 (LHQNAKDTSMQKTIPIVALTLTSYMGLTQPFLGLCAYMSTQVFGRRS). A helical transmembrane segment spans residues 1356–1376 (IPVNEALAAAGLVGVLAGLAF). The Lumenal portion of the chain corresponds to 1377–1378 (QD). Residues 1379-1399 (MENFLGPIAVGGILMMLVSVA) traverse the membrane as a helical segment. Topologically, residues 1400–1456 (GKVDGLELKKLGEVSWEEEAEISGSSSRYDVALSEQGEFKLLSEDKVPWDQIVMTSL) are cytoplasmic. An interacts with and activates NS3 protease region spans residues 1407 to 1446 (LKKLGEVSWEEEAEISGSSSRYDVALSEQGEFKLLSEDKV). The helical intramembrane region spans 1457–1477 (ALVGAAIHPFALLLVLGGWVL). Residues 1478–2157 (HIKGARRSGD…RNALSMMPEA (680 aa)) lie on the Cytoplasmic side of the membrane. One can recognise a Peptidase S7 domain in the interval 1485 to 1665 (SGDVLWDIPT…EVKEESKEEL (181 aa)). Active-site charge relay system; for serine protease NS3 activity residues include H1537, D1561, and S1622. The Helicase ATP-binding domain maps to 1669-1825 (PTMLKKGMTT…HSNGEIEDVQ (157 aa)). The interval 1673 to 1676 (KKGM) is important for RNA-binding. 1682-1689 (FHPGAGKT) serves as a coordination point for ATP. A DEAH box motif is present at residues 1773 to 1776 (DEAH). Positions 1820–1997 (EIEDVQTDIP…VRGGMVAPLY (178 aa)) constitute a Helicase C-terminal domain. The residue at position 1877 (K1877) is an N6-acetyllysine; by host. The disordered stretch occupies residues 1942-1961 (AAQRRGRIGRNPNRDGDSYY). The chain crosses the membrane as a helical span at residues 2158–2178 (MTIVMLFILAGLLTSGMVIFF). At 2179 to 2186 (MSPKGMSR) the chain is on the lumenal side. An intramembrane region (helical) is located at residues 2187–2207 (MSMAMGTMAGSGYLMFLGGVK). Over 2208–2209 (PT) the chain is Lumenal. A helical transmembrane segment spans residues 2210 to 2230 (HISYVMLIFFVLMVVIIPEPG). Topologically, residues 2231-2241 (QQRTIQDNQVA) are cytoplasmic. A helical membrane pass occupies residues 2242–2262 (YLIIGILTLLSIVAANELGML). The Lumenal portion of the chain corresponds to 2263–2293 (EKTKEDFFGRRNIATSGGTIPWSWPDLDLKP). The helical intramembrane region spans 2294-2314 (GAAWTVYVGIVTMLSPMLHHW). Residues 2315-2360 (IKVEYGNLSLSGIAQSASVLSFMDKGIPFMKMNISVVILLVSGWNS) are Lumenal-facing. A helical membrane pass occupies residues 2361 to 2380 (ITVIPLLCGVGGAMLHWTLI). At 2381–2421 (LPGIKAQQSKLAQKRVFHGVAKNPVVDGNPTADIEEAPEMP) the chain is on the cytoplasmic side. Residues 2422-2442 (ALYEKKLALYLLLALSLMSVA) form a helical membrane-spanning segment. The Lumenal segment spans residues 2443-2445 (MCR). A helical membrane pass occupies residues 2446-2466 (TPFSLAEGIVLSSAALGPLIE). Residues 2467 to 3411 (GNTSLLWNGP…VDADLQPGEL (945 aa)) lie on the Cytoplasmic side of the membrane. Positions 2508–2772 (GSASGKTLGE…DVILPIGTRS (265 aa)) constitute an mRNA cap 0-1 NS5-type MT domain. Residue S2563 participates in S-adenosyl-L-methionine binding. S2563 is subject to Phosphoserine. K2568 acts as the For 2'-O-MTase activity in catalysis. S-adenosyl-L-methionine contacts are provided by G2593, W2594, T2611, L2612, D2638, and I2639. D2653 functions as the For 2'-O-MTase activity in the catalytic mechanism. Position 2654 (I2654) interacts with S-adenosyl-L-methionine. Catalysis depends on for 2'-O-MTase activity residues K2689 and E2725. Y2727 contributes to the S-adenosyl-L-methionine binding site. Residues 2879–2912 (RKIMKVVNRWLFRHLAREKNPRLCTKEEFIAKVR) carry the Nuclear localization signal motif. Residues E2946, H2950, C2955, and C2958 each coordinate Zn(2+). Residues 3036–3188 (GGFYADDTAG…RPVDDRFGLA (153 aa)) form the RdRp catalytic domain. Zn(2+) is bound by residues H3223, C3239, and C3358.

The protein in the N-terminal section; belongs to the class I-like SAM-binding methyltransferase superfamily. mRNA cap 0-1 NS5-type methyltransferase family. In terms of assembly, homodimer. Interacts (via N-terminus) with host EXOC1 (via C-terminus); this interaction results in EXOC1 degradation through the proteasome degradation pathway. Forms heterodimers with envelope protein E in the endoplasmic reticulum and Golgi. As to quaternary structure, homodimer; in the endoplasmic reticulum and Golgi. Interacts with protein prM. Interacts with non-structural protein 1. In terms of assembly, homodimer; Homohexamer when secreted. Interacts with envelope protein E. Interacts (via N-terminus) with serine protease NS3. As to quaternary structure, forms a heterodimer with serine protease NS3. May form homooligomers. In terms of assembly, forms a heterodimer with NS2B. Interacts with non-structural protein 2A (via N-terminus). Interacts with NS4B. Interacts with unphosphorylated RNA-directed RNA polymerase NS5; this interaction stimulates RNA-directed RNA polymerase NS5 guanylyltransferase activity. NS3 interacts with host PDCD6IP; this interaction contributes to virion release. Interacts with serine protease NS3. As to quaternary structure, homodimer. Interacts with host STAT2; this interaction prevents the establishment of cellular antiviral state. Interacts with serine protease NS3. Interacts with host TRIM23; this interaction leads to NS5 ubiquitination. Specific enzymatic cleavages in vivo yield mature proteins. The nascent capsid protein C contains a C-terminal hydrophobic domain that act as a signal sequence for translocation of prM into the lumen of the ER. Mature capsid protein C is cleaved at a site upstream of this hydrophobic domain by NS3. prM is cleaved in post-Golgi vesicles by a host furin, releasing the mature small envelope protein M, and peptide pr. Non-structural protein 2A-alpha, a C-terminally truncated form of non-structural protein 2A, results from partial cleavage by NS3. Specific enzymatic cleavages in vivo yield mature proteins peptide 2K acts as a signal sequence and is removed from the N-terminus of NS4B by the host signal peptidase in the ER lumen. Signal cleavage at the 2K-4B site requires a prior NS3 protease-mediated cleavage at the 4A-2K site. In terms of processing, cleaved in post-Golgi vesicles by a host furin, releasing the mature small envelope protein M, and peptide pr. This cleavage is incomplete as up to 30% of viral particles still carry uncleaved prM. Post-translationally, N-glycosylated. N-glycosylated. The excreted form is glycosylated and this is required for efficient secretion of the protein from infected cells. In terms of processing, polyubiquitinated; ubiquitination is probably mediated by host TRIM23 and is prerequisite for NS5-STAT2 interaction. NS5 is not ISGylated or sumoylated. Post-translationally, acetylated by host KAT5. Acetylation modulates NS3 RNA-binding and unwinding activities and plays an important positive role for viral replication. Phosphorylated on serines residues. This phosphorylation may trigger NS5 nuclear localization.

It localises to the virion. It is found in the host nucleus. The protein resides in the host cytoplasm. Its subcellular location is the host perinuclear region. The protein localises to the secreted. It localises to the virion membrane. It is found in the host endoplasmic reticulum membrane. The catalysed reaction is Selective hydrolysis of -Xaa-Xaa-|-Yaa- bonds in which each of the Xaa can be either Arg or Lys and Yaa can be either Ser or Ala.. The enzyme catalyses RNA(n) + a ribonucleoside 5'-triphosphate = RNA(n+1) + diphosphate. It catalyses the reaction a ribonucleoside 5'-triphosphate + H2O = a ribonucleoside 5'-diphosphate + phosphate + H(+). It carries out the reaction ATP + H2O = ADP + phosphate + H(+). The catalysed reaction is a 5'-end (5'-triphosphoguanosine)-ribonucleoside in mRNA + S-adenosyl-L-methionine = a 5'-end (N(7)-methyl 5'-triphosphoguanosine)-ribonucleoside in mRNA + S-adenosyl-L-homocysteine. The enzyme catalyses a 5'-end (N(7)-methyl 5'-triphosphoguanosine)-ribonucleoside in mRNA + S-adenosyl-L-methionine = a 5'-end (N(7)-methyl 5'-triphosphoguanosine)-(2'-O-methyl-ribonucleoside) in mRNA + S-adenosyl-L-homocysteine + H(+). Functionally, plays a role in virus budding by binding to the cell membrane and gathering the viral RNA into a nucleocapsid that forms the core of a mature virus particle. During virus entry, may induce genome penetration into the host cytoplasm after hemifusion induced by the surface proteins. Can migrate to the cell nucleus where it modulates host functions. Its function is as follows. Inhibits RNA silencing by interfering with host Dicer. In terms of biological role, prevents premature fusion activity of envelope proteins in trans-Golgi by binding to envelope protein E at pH6.0. After virion release in extracellular space, gets dissociated from E dimers. Acts as a chaperone for envelope protein E during intracellular virion assembly by masking and inactivating envelope protein E fusion peptide. prM is the only viral peptide matured by host furin in the trans-Golgi network probably to avoid catastrophic activation of the viral fusion activity in acidic Golgi compartment prior to virion release. prM-E cleavage is inefficient, and many virions are only partially matured. These uncleaved prM would play a role in immune evasion. Functionally, may play a role in virus budding. Exerts cytotoxic effects by activating a mitochondrial apoptotic pathway through M ectodomain. May display a viroporin activity. Its function is as follows. Binds to host cell surface receptor and mediates fusion between viral and cellular membranes. Envelope protein is synthesized in the endoplasmic reticulum in the form of heterodimer with protein prM. They play a role in virion budding in the ER, and the newly formed immature particle is covered with 60 spikes composed of heterodimer between precursor prM and envelope protein E. The virion is transported to the Golgi apparatus where the low pH causes dissociation of PrM-E heterodimers and formation of E homodimers. prM-E cleavage is inefficient, and many virions are only partially matured. These uncleaved prM would play a role in immune evasion. In terms of biological role, involved in immune evasion, pathogenesis and viral replication. Once cleaved off the polyprotein, is targeted to three destinations: the viral replication cycle, the plasma membrane and the extracellular compartment. Essential for viral replication. Required for formation of the replication complex and recruitment of other non-structural proteins to the ER-derived membrane structures. Excreted as a hexameric lipoparticle that plays a role against host immune response. Antagonizing the complement function. Binds to the host macrophages and dendritic cells. Inhibits signal transduction originating from Toll-like receptor 3 (TLR3). Component of the viral RNA replication complex that functions in virion assembly and antagonizes the host immune response. Functionally, required cofactor for the serine protease function of NS3. May have membrane-destabilizing activity and form viroporins. Its function is as follows. Displays three enzymatic activities: serine protease, NTPase and RNA helicase. NS3 serine protease, in association with NS2B, performs its autocleavage and cleaves the polyprotein at dibasic sites in the cytoplasm: C-prM, NS2A-NS2B, NS2B-NS3, NS3-NS4A, NS4A-2K and NS4B-NS5. NS3 RNA helicase binds RNA and unwinds dsRNA in the 3' to 5' direction. Also plays a role in virus assembly. In terms of biological role, regulates the ATPase activity of the NS3 helicase activity. NS4A allows NS3 helicase to conserve energy during unwinding. Functions as a signal peptide for NS4B and is required for the interferon antagonism activity of the latter. Functionally, induces the formation of ER-derived membrane vesicles where the viral replication takes place. Inhibits interferon (IFN)-induced host STAT1 phosphorylation and nuclear translocation, thereby preventing the establishment of cellular antiviral state by blocking the IFN-alpha/beta pathway. Its function is as follows. Replicates the viral (+) and (-) RNA genome, and performs the capping of genomes in the cytoplasm. NS5 methylates viral RNA cap at guanine N-7 and ribose 2'-O positions. Besides its role in RNA genome replication, also prevents the establishment of cellular antiviral state by blocking the interferon-alpha/beta (IFN-alpha/beta) signaling pathway. IFN-I induces binding of NS5 to host IFN-activated transcription factor STAT2, preventing its transcriptional activity. Host TRIM23 is the E3 ligase that interacts with and polyubiquitinates NS5 to promote its binding to STAT2 and trigger IFN-I signaling inhibition. In Yellow fever virus (isolate Ethiopia/Couma/1961) (YFV), this protein is Genome polyprotein.